The chain runs to 97 residues: Small ribosomal subunit protein bS20 (97 aa).

This sequence belongs to the bacterial ribosomal protein bS20 family.

Binds directly to 16S ribosomal RNA. The polypeptide is Small ribosomal subunit protein bS20 (Prochlorococcus marinus (strain MIT 9312)).